We begin with the raw amino-acid sequence, 312 residues long: Putative B3 domain-containing protein Os10g0537100 (312 aa).

The TF-B3 DNA-binding region spans F35–R153. Disordered stretches follow at residues F161–L182 and L286–L312. Positions H170 to P180 are enriched in basic residues. Positions L286–A301 are enriched in low complexity.

It localises to the nucleus. The sequence is that of Putative B3 domain-containing protein Os10g0537100 from Oryza sativa subsp. japonica (Rice).